A 419-amino-acid chain; its full sequence is GTPase Obg (419 aa).

An Obg domain is found at 1–158; that stretch reads MFVDQARIFV…KWIRLELKLL (158 aa). The 169-residue stretch at 159–327 folds into the OBG-type G domain; it reads ADVGLVGFPN…LMGKTYALLQ (169 aa). Residues 165-172, 190-194, 212-215, 282-285, and 308-310 contribute to the GTP site; these read GFPNAGKS, FTTLV, DIPG, NKMD, and SAV. Residues Ser172 and Thr192 each coordinate Mg(2+). An OCT domain is found at 342–419; sequence RRFEEELPFK…IKDFEFEFTE (78 aa).

The protein belongs to the TRAFAC class OBG-HflX-like GTPase superfamily. OBG GTPase family. In terms of assembly, monomer. The cofactor is Mg(2+).

The protein resides in the cytoplasm. Its function is as follows. An essential GTPase which binds GTP, GDP and possibly (p)ppGpp with moderate affinity, with high nucleotide exchange rates and a fairly low GTP hydrolysis rate. Plays a role in control of the cell cycle, stress response, ribosome biogenesis and in those bacteria that undergo differentiation, in morphogenesis control. In Syntrophomonas wolfei subsp. wolfei (strain DSM 2245B / Goettingen), this protein is GTPase Obg.